A 241-amino-acid chain; its full sequence is Class B acid phosphatase (241 aa).

Positions M1–A27 are cleaved as a signal peptide. D72 functions as the Nucleophile in the catalytic mechanism. 2 residues coordinate Mg(2+): D72 and D74. The active-site Proton donor is the D74. Substrate is bound by residues T141–G142 and K181. D196 contacts Mg(2+).

It belongs to the class B bacterial acid phosphatase family. In terms of assembly, homotetramer. Mg(2+) is required as a cofactor.

It localises to the periplasm. It catalyses the reaction a phosphate monoester + H2O = an alcohol + phosphate. Its function is as follows. Dephosphorylates several organic phosphate monoesters. Also has a phosphotransferase activity catalyzing the transfer of low-energy phosphate groups from organic phosphate monoesters to free hydroxyl groups of various organic compounds. The polypeptide is Class B acid phosphatase (Edwardsiella ictaluri (strain 93-146)).